The sequence spans 192 residues: tRNA (cytidine(56)-2'-O)-methyltransferase (192 aa).

Residues leucine 84 and 112 to 116 (GGEKV) each bind S-adenosyl-L-methionine.

Belongs to the aTrm56 family. In terms of assembly, homodimer.

The protein resides in the cytoplasm. It carries out the reaction cytidine(56) in tRNA + S-adenosyl-L-methionine = 2'-O-methylcytidine(56) in tRNA + S-adenosyl-L-homocysteine + H(+). Specifically catalyzes the AdoMet-dependent 2'-O-ribose methylation of cytidine at position 56 in tRNAs. The chain is tRNA (cytidine(56)-2'-O)-methyltransferase from Halobacterium salinarum (strain ATCC 700922 / JCM 11081 / NRC-1) (Halobacterium halobium).